We begin with the raw amino-acid sequence, 319 residues long: Ribose-phosphate pyrophosphokinase (319 aa).

ATP-binding positions include asparagine 41–glutamate 43 and arginine 100–glutamine 101. Mg(2+) contacts are provided by histidine 134 and aspartate 175. Lysine 198 is a catalytic residue. Residues arginine 200, aspartate 224, and aspartate 228–serine 232 each bind D-ribose 5-phosphate.

This sequence belongs to the ribose-phosphate pyrophosphokinase family. Class I subfamily. As to quaternary structure, homohexamer. Requires Mg(2+) as cofactor.

Its subcellular location is the cytoplasm. The catalysed reaction is D-ribose 5-phosphate + ATP = 5-phospho-alpha-D-ribose 1-diphosphate + AMP + H(+). It participates in metabolic intermediate biosynthesis; 5-phospho-alpha-D-ribose 1-diphosphate biosynthesis; 5-phospho-alpha-D-ribose 1-diphosphate from D-ribose 5-phosphate (route I): step 1/1. Its function is as follows. Involved in the biosynthesis of the central metabolite phospho-alpha-D-ribosyl-1-pyrophosphate (PRPP) via the transfer of pyrophosphoryl group from ATP to 1-hydroxyl of ribose-5-phosphate (Rib-5-P). The polypeptide is Ribose-phosphate pyrophosphokinase (Clostridium acetobutylicum (strain ATCC 824 / DSM 792 / JCM 1419 / IAM 19013 / LMG 5710 / NBRC 13948 / NRRL B-527 / VKM B-1787 / 2291 / W)).